The sequence spans 155 residues: Cardioactive peptide (155 aa).

A signal peptide spans 1 to 23 (MRTSMRISLRLLALLACAICSQA). A propeptide spanning residues 24-49 (SLERENNEGTNMANHKLSGVIQWKYE) is cleaved from the precursor. Cys-54 and Cys-60 are oxidised to a cystine. Position 60 is a cysteine amide (Cys-60). Positions 64–155 (RTYPSYPPFS…MQQLEERESK (92 aa)) are excised as a propeptide. The segment at 135–155 (NKQKMLQNEKEMQQLEERESK) is disordered. Residues 141–155 (QNEKEMQQLEERESK) show a composition bias toward basic and acidic residues.

As to expression, central nervous system; most neurons exhibit coexpression with Burs.

It localises to the secreted. Cardioregulatory neurohormone that increases heart beat rate during adult wing inflation; has no effect on beat amplitude. The effect of CCAP is both ino- and chronotropic. This is Cardioactive peptide from Drosophila melanogaster (Fruit fly).